A 78-amino-acid polypeptide reads, in one-letter code: High temperature lethal protein 1 (78 aa).

Position 2 is an N-acetylserine (Ser2).

Interacts directly with RSC8. Component of the two forms of the RSC complex composed of at least either RSC1 or RSC2, and ARP7, ARP9, LDB7, NPL6, RSC3, RSC30, RSC4, RSC58, RSC6, RSC8, RSC9, SFH1, STH1, HTL1 and probably RTT102. The complexes interact with histone and histone variant components of centromeric chromatin. Component of a fungal-specific module (HTL1-LDB7-NPL6-RSC3-RSC30) within the RSC complex.

The protein localises to the nucleus. Its function is as follows. Required for cell cycle progression through G2/M transition at temperatures higher than 33 degrees Celsius. Component of the chromatin structure-remodeling complex (RSC), which is involved in transcription regulation and nucleosome positioning. RSC is responsible for the transfer of a histone octamer from a nucleosome core particle to naked DNA. The reaction requires ATP and involves an activated RSC-nucleosome intermediate. Remodeling reaction also involves DNA translocation, DNA twist and conformational change. As a reconfigurer of centromeric and flanking nucleosomes, RSC complex is required both for proper kinetochore function in chromosome segregation and, via a PKC1-dependent signaling pathway, for organization of the cellular cytoskeleton. When associated with the RSC complex, may act coordinately with PKC1 to regulate G2/M transition. Together with LDB7, NPL6, RSC3, RSC30 components, defines a fungal-specific module within the RSC complex that plays a role in many cellular functions including the maintenance of cell wall integrity. This is High temperature lethal protein 1 (HTL1) from Saccharomyces cerevisiae (strain ATCC 204508 / S288c) (Baker's yeast).